The primary structure comprises 282 residues: Proteasome subunit beta (282 aa).

Positions 1–54 (MGSHRDLPAGMVNHIFTNSGISSFTEFVGSYAPDLLPGRNETLAAPVGDRIPHA) are cleaved as a propeptide — removed in mature form; by autocatalysis. Catalysis depends on Thr-55, which acts as the Nucleophile.

This sequence belongs to the peptidase T1B family. As to quaternary structure, the 20S proteasome core is composed of 14 alpha and 14 beta subunits that assemble into four stacked heptameric rings, resulting in a barrel-shaped structure. The two inner rings, each composed of seven catalytic beta subunits, are sandwiched by two outer rings, each composed of seven alpha subunits. The catalytic chamber with the active sites is on the inside of the barrel. Has a gated structure, the ends of the cylinder being occluded by the N-termini of the alpha-subunits. Is capped by the proteasome-associated ATPase, ARC.

It is found in the cytoplasm. The catalysed reaction is Cleavage of peptide bonds with very broad specificity.. Its pathway is protein degradation; proteasomal Pup-dependent pathway. The formation of the proteasomal ATPase ARC-20S proteasome complex, likely via the docking of the C-termini of ARC into the intersubunit pockets in the alpha-rings, may trigger opening of the gate for substrate entry. Interconversion between the open-gate and close-gate conformations leads to a dynamic regulation of the 20S proteasome proteolysis activity. Its function is as follows. Component of the proteasome core, a large protease complex with broad specificity involved in protein degradation. This is Proteasome subunit beta from Streptosporangium roseum (strain ATCC 12428 / DSM 43021 / JCM 3005 / KCTC 9067 / NCIMB 10171 / NRRL 2505 / NI 9100).